We begin with the raw amino-acid sequence, 1287 residues long: DNA-directed RNA polymerase 147 kDa polypeptide (1287 aa).

Belongs to the poxviridae DNA-directed RNA polymerase 147 kDa subunit family. In terms of assembly, the DNA-dependent RNA polymerase used for intermediate and late genes expression consists of eight subunits Rpo30/OPG66, Rpo7/OPG90, Rpo22/OPG103, Rpo147/OPG105, Rpo18/OPG119, Rpo19/OPG131, Rpo132/OPG151 and Rpo35/OPG156. The same holoenzyme, with the addition of the transcription-specificity factor OPG109, is used for early gene expression.

The protein localises to the virion. It carries out the reaction RNA(n) + a ribonucleoside 5'-triphosphate = RNA(n+1) + diphosphate. Its function is as follows. Part of the DNA-dependent RNA polymerase which catalyzes the transcription of viral DNA into RNA using the four ribonucleoside triphosphates as substrates. Responsible for the transcription of early, intermediate and late genes. DNA-dependent RNA polymerase associates with the early transcription factor (ETF), itself composed of OPG118 and OPG133, thereby allowing the early genes transcription. Late transcription, and probably also intermediate transcription, require newly synthesized RNA polymerase. This chain is DNA-directed RNA polymerase 147 kDa polypeptide (OPG105), found in Fowlpox virus (strain NVSL) (FPV).